The following is a 422-amino-acid chain: UDP-N-acetylglucosamine 1-carboxyvinyltransferase (422 aa).

22-23 (KN) lines the phosphoenolpyruvate pocket. Residue arginine 94 participates in UDP-N-acetyl-alpha-D-glucosamine binding. Cysteine 118 acts as the Proton donor in catalysis. Cysteine 118 is subject to 2-(S-cysteinyl)pyruvic acid O-phosphothioketal. UDP-N-acetyl-alpha-D-glucosamine contacts are provided by residues 123-127 (RPVDL), 163-166 (KVSV), aspartate 308, and isoleucine 330.

Belongs to the EPSP synthase family. MurA subfamily.

It localises to the cytoplasm. The enzyme catalyses phosphoenolpyruvate + UDP-N-acetyl-alpha-D-glucosamine = UDP-N-acetyl-3-O-(1-carboxyvinyl)-alpha-D-glucosamine + phosphate. Its pathway is cell wall biogenesis; peptidoglycan biosynthesis. In terms of biological role, cell wall formation. Adds enolpyruvyl to UDP-N-acetylglucosamine. This Yersinia enterocolitica serotype O:8 / biotype 1B (strain NCTC 13174 / 8081) protein is UDP-N-acetylglucosamine 1-carboxyvinyltransferase.